Consider the following 372-residue polypeptide: Glutamate 5-kinase (372 aa).

Lys-14 serves as a coordination point for ATP. Residues Ser-54, Asp-141, and Asn-153 each coordinate substrate. Residues 173–174 and 215–221 each bind ATP; these read TD and TGGMATK. The 79-residue stretch at 280–358 folds into the PUA domain; that stretch reads RGQLVIDAGA…DSIEEVLGYD (79 aa).

Belongs to the glutamate 5-kinase family.

The protein resides in the cytoplasm. It catalyses the reaction L-glutamate + ATP = L-glutamyl 5-phosphate + ADP. Its pathway is amino-acid biosynthesis; L-proline biosynthesis; L-glutamate 5-semialdehyde from L-glutamate: step 1/2. Functionally, catalyzes the transfer of a phosphate group to glutamate to form L-glutamate 5-phosphate. This chain is Glutamate 5-kinase, found in Shewanella pealeana (strain ATCC 700345 / ANG-SQ1).